The sequence spans 315 residues: Prephenate dehydratase (315 aa).

The Prephenate dehydratase domain occupies 7-190; it reads VVAYLGPAGT…ARTRFVAVQA (184 aa). One can recognise an ACT domain in the interval 204–283; sequence SVIFSLPNVP…LVFVGSWPSN (80 aa).

The enzyme catalyses prephenate + H(+) = 3-phenylpyruvate + CO2 + H2O. It participates in amino-acid biosynthesis; L-phenylalanine biosynthesis; phenylpyruvate from prephenate: step 1/1. In Corynebacterium glutamicum (strain ATCC 13032 / DSM 20300 / JCM 1318 / BCRC 11384 / CCUG 27702 / LMG 3730 / NBRC 12168 / NCIMB 10025 / NRRL B-2784 / 534), this protein is Prephenate dehydratase (pheA).